The primary structure comprises 178 residues: Protamine-like protein (178 aa).

Disordered regions lie at residues 1-27 and 77-178; these read PSTT…TVSD and SVVK…RAKK. 2 stretches are compositionally biased toward basic residues: residues 8-21 and 94-178; these read SPKR…RKRT and PRRR…RAKK. Residues 21-89 form the H15 domain; the sequence is TGPTVSDLIL…KAKGFYKLNK (69 aa).

In terms of tissue distribution, male germ cells.

The protein resides in the nucleus. It is found in the chromosome. Functionally, replaces histones in the chromatin of sperm during the haploid phase of spermatogenesis. Compacts sperm DNA into a highly condensed, stable and inactive complex. In Mullus surmuletus (Striped red mullet), this protein is Protamine-like protein.